The chain runs to 816 residues: Microbial collagenase (816 aa).

A signal peptide spans M1–A27. Position 435 (H435) interacts with Zn(2+). E436 is an active-site residue. H439 contributes to the Zn(2+) binding site.

The protein belongs to the peptidase M9A family. Zn(2+) serves as cofactor.

The protein localises to the secreted. It catalyses the reaction Digestion of native collagen in the triple helical region at Xaa-|-Gly bonds. With synthetic peptides, a preference is shown for Gly at P3 and P1', Pro and Ala at P2 and P2', and hydroxyproline, Ala or Arg at P3'.. Functionally, possesses gelatinolytic activity. Can cause weak haemolysis on blood agar. This is Microbial collagenase (prt) from Vibrio parahaemolyticus serotype O3:K6 (strain RIMD 2210633).